The following is a 358-amino-acid chain: tRNA-specific 2-thiouridylase MnmA (358 aa).

ATP is bound by residues 7–14 and L33; that span reads AMSGGVDS. The Nucleophile role is filled by C101. C101 and C197 are disulfide-bonded. Residue G125 coordinates ATP. The interaction with tRNA stretch occupies residues 147–149; sequence KDQ. C197 functions as the Cysteine persulfide intermediate in the catalytic mechanism.

The protein belongs to the MnmA/TRMU family.

It localises to the cytoplasm. It catalyses the reaction S-sulfanyl-L-cysteinyl-[protein] + uridine(34) in tRNA + AH2 + ATP = 2-thiouridine(34) in tRNA + L-cysteinyl-[protein] + A + AMP + diphosphate + H(+). Functionally, catalyzes the 2-thiolation of uridine at the wobble position (U34) of tRNA, leading to the formation of s(2)U34. In Rickettsia prowazekii (strain Madrid E), this protein is tRNA-specific 2-thiouridylase MnmA.